A 162-amino-acid polypeptide reads, in one-letter code: 6,7-dimethyl-8-ribityllumazine synthase (162 aa).

Residues tyrosine 27, 58–60, and 87–89 each bind 5-amino-6-(D-ribitylamino)uracil; these read ALE and CVI. 92 to 93 serves as a coordination point for (2S)-2-hydroxy-3-oxobutyl phosphate; that stretch reads ET. Histidine 95 (proton donor) is an active-site residue. Asparagine 120 is a binding site for 5-amino-6-(D-ribitylamino)uracil. Arginine 134 is a (2S)-2-hydroxy-3-oxobutyl phosphate binding site.

This sequence belongs to the DMRL synthase family.

It catalyses the reaction (2S)-2-hydroxy-3-oxobutyl phosphate + 5-amino-6-(D-ribitylamino)uracil = 6,7-dimethyl-8-(1-D-ribityl)lumazine + phosphate + 2 H2O + H(+). It participates in cofactor biosynthesis; riboflavin biosynthesis; riboflavin from 2-hydroxy-3-oxobutyl phosphate and 5-amino-6-(D-ribitylamino)uracil: step 1/2. Its function is as follows. Catalyzes the formation of 6,7-dimethyl-8-ribityllumazine by condensation of 5-amino-6-(D-ribitylamino)uracil with 3,4-dihydroxy-2-butanone 4-phosphate. This is the penultimate step in the biosynthesis of riboflavin. The chain is 6,7-dimethyl-8-ribityllumazine synthase from Azorhizobium caulinodans (strain ATCC 43989 / DSM 5975 / JCM 20966 / LMG 6465 / NBRC 14845 / NCIMB 13405 / ORS 571).